Reading from the N-terminus, the 320-residue chain is Pantothenate kinase (320 aa).

96–103 contributes to the ATP binding site; that stretch reads GSVAVGKS.

The protein belongs to the prokaryotic pantothenate kinase family.

It localises to the cytoplasm. It carries out the reaction (R)-pantothenate + ATP = (R)-4'-phosphopantothenate + ADP + H(+). The protein operates within cofactor biosynthesis; coenzyme A biosynthesis; CoA from (R)-pantothenate: step 1/5. This is Pantothenate kinase from Brevibacillus brevis (strain 47 / JCM 6285 / NBRC 100599).